Reading from the N-terminus, the 381-residue chain is Homoserine O-succinyltransferase (381 aa).

An AB hydrolase-1 domain is found at 45–360 (NAVLVCHALN…PHGHDAFLLD (316 aa)). The Nucleophile role is filled by S151. Residue R221 coordinates substrate. Catalysis depends on residues D321 and H354. D355 contacts substrate.

The protein belongs to the AB hydrolase superfamily. MetX family. In terms of assembly, homodimer.

It localises to the cytoplasm. It catalyses the reaction L-homoserine + succinyl-CoA = O-succinyl-L-homoserine + CoA. It participates in amino-acid biosynthesis; L-methionine biosynthesis via de novo pathway; O-succinyl-L-homoserine from L-homoserine: step 1/1. Transfers a succinyl group from succinyl-CoA to L-homoserine, forming succinyl-L-homoserine. The sequence is that of Homoserine O-succinyltransferase from Paraburkholderia phytofirmans (strain DSM 17436 / LMG 22146 / PsJN) (Burkholderia phytofirmans).